Here is a 63-residue protein sequence, read N- to C-terminus: uncharacterized protein (63 aa).

The N-terminal stretch at methionine 1–alanine 21 is a signal peptide.

This is an uncharacterized protein from Dictyostelium discoideum (Social amoeba).